Consider the following 109-residue polypeptide: MKLSIIIIATSLVIAVVAFPSKDSKAIENDKTEQRMEIVVQETARACSKQIGDKRKRNCECCGKTVVCGTIYVGGKEVNQCMDKTSDNAILNGLGKGMNFIENTFSFCV.

Positions 1 to 18 (MKLSIIIIATSLVIAVVA) are cleaved as a signal peptide. Residues 19–46 (FPSKDSKAIENDKTEQRMEIVVQETARA) constitute a propeptide that is removed on maturation. 3 cysteine pairs are disulfide-bonded: Cys-47/Cys-62, Cys-59/Cys-108, and Cys-61/Cys-81.

The protein belongs to the neurotoxin 25 family. F7 subfamily. In terms of tissue distribution, expressed by the venom gland.

It localises to the secreted. Putative ion channel inhibitor. The sequence is that of Hainantoxin-XVIII-2 from Cyriopagopus hainanus (Chinese bird spider).